The primary structure comprises 336 residues: DNA-directed RNA polymerase subunit alpha (336 aa).

The interval 1 to 232 is alpha N-terminal domain (alpha-NTD); that stretch reads MIQKNWQELI…DQLSVFVNFD (232 aa). The alpha C-terminal domain (alpha-CTD) stretch occupies residues 248 to 336; that stretch reads FNPALLKKVD…DLAKRYEDQY (89 aa).

The protein belongs to the RNA polymerase alpha chain family. Homodimer. The RNAP catalytic core consists of 2 alpha, 1 beta, 1 beta' and 1 omega subunit. When a sigma factor is associated with the core the holoenzyme is formed, which can initiate transcription.

It catalyses the reaction RNA(n) + a ribonucleoside 5'-triphosphate = RNA(n+1) + diphosphate. Functionally, DNA-dependent RNA polymerase catalyzes the transcription of DNA into RNA using the four ribonucleoside triphosphates as substrates. This Sinorhizobium medicae (strain WSM419) (Ensifer medicae) protein is DNA-directed RNA polymerase subunit alpha.